Consider the following 258-residue polypeptide: Imidazole glycerol phosphate synthase subunit HisF (258 aa).

Active-site residues include Asp11 and Asp130.

It belongs to the HisA/HisF family. Heterodimer of HisH and HisF.

The protein resides in the cytoplasm. The catalysed reaction is 5-[(5-phospho-1-deoxy-D-ribulos-1-ylimino)methylamino]-1-(5-phospho-beta-D-ribosyl)imidazole-4-carboxamide + L-glutamine = D-erythro-1-(imidazol-4-yl)glycerol 3-phosphate + 5-amino-1-(5-phospho-beta-D-ribosyl)imidazole-4-carboxamide + L-glutamate + H(+). The protein operates within amino-acid biosynthesis; L-histidine biosynthesis; L-histidine from 5-phospho-alpha-D-ribose 1-diphosphate: step 5/9. Its function is as follows. IGPS catalyzes the conversion of PRFAR and glutamine to IGP, AICAR and glutamate. The HisF subunit catalyzes the cyclization activity that produces IGP and AICAR from PRFAR using the ammonia provided by the HisH subunit. This chain is Imidazole glycerol phosphate synthase subunit HisF, found in Shigella boydii serotype 4 (strain Sb227).